Consider the following 397-residue polypeptide: Succinyl-diaminopimelate desuccinylase (397 aa).

A Zn(2+)-binding site is contributed by His-73. Asp-75 is a catalytic residue. Asp-106 contributes to the Zn(2+) binding site. Residue Glu-140 is the Proton acceptor of the active site. Residues Glu-141, Glu-169, and His-366 each contribute to the Zn(2+) site.

Belongs to the peptidase M20A family. DapE subfamily. Homodimer. Zn(2+) serves as cofactor. Requires Co(2+) as cofactor.

The catalysed reaction is N-succinyl-(2S,6S)-2,6-diaminopimelate + H2O = (2S,6S)-2,6-diaminopimelate + succinate. It participates in amino-acid biosynthesis; L-lysine biosynthesis via DAP pathway; LL-2,6-diaminopimelate from (S)-tetrahydrodipicolinate (succinylase route): step 3/3. In terms of biological role, catalyzes the hydrolysis of N-succinyl-L,L-diaminopimelic acid (SDAP), forming succinate and LL-2,6-diaminopimelate (DAP), an intermediate involved in the bacterial biosynthesis of lysine and meso-diaminopimelic acid, an essential component of bacterial cell walls. The chain is Succinyl-diaminopimelate desuccinylase from Rhizobium meliloti (strain 1021) (Ensifer meliloti).